Consider the following 240-residue polypeptide: Uridylate kinase (240 aa).

13-16 lines the ATP pocket; the sequence is KISG. A UMP-binding site is contributed by glycine 55. Positions 56 and 60 each coordinate ATP. UMP contacts are provided by residues aspartate 75 and 136–143; that span reads TGNPFFTT. The ATP site is built by threonine 163, glutamine 164, tyrosine 169, and aspartate 172.

This sequence belongs to the UMP kinase family. Homohexamer.

It localises to the cytoplasm. The catalysed reaction is UMP + ATP = UDP + ADP. The protein operates within pyrimidine metabolism; CTP biosynthesis via de novo pathway; UDP from UMP (UMPK route): step 1/1. Inhibited by UTP. Functionally, catalyzes the reversible phosphorylation of UMP to UDP. This Paramagnetospirillum magneticum (strain ATCC 700264 / AMB-1) (Magnetospirillum magneticum) protein is Uridylate kinase.